The sequence spans 389 residues: Probable transcription factor FL (389 aa).

2 disordered regions span residues 1-41 (MDPN…ANVP) and 140-226 (EHDM…HPFV). Residues 19–39 (PPAPAPVPPPPPPPPPPPPAN) are compositionally biased toward pro residues. Over residues 159–180 (VTGKKQAKKGSAARKGKKARRK) the composition is skewed to basic residues. A Nuclear localization signal motif is present at residues 161–168 (GKKQAKKG). Acidic residues predominate over residues 190–201 (QEDEMDCCDEDG). 3 consecutive DNA-binding regions follow at residues 221–225 (REHPF), 290–297 (NKPKMRHY), and 361–364 (YVPT).

It belongs to the FLO/LFY family. Interacts with APO1. As to expression, in very young panicle but not in mature florets, mature leaves, roots or apical meristems.

It is found in the nucleus. Its function is as follows. Probable transcription factor. Together with APO1, involved in the temporal regulation of meristem size and identity during both vegetative and reproductive developments through interaction with APO1. Promotes flowering. The polypeptide is Probable transcription factor FL (Oryza sativa subsp. japonica (Rice)).